Reading from the N-terminus, the 406-residue chain is Biofilm regulatory protein A (406 aa).

An N-terminal signal peptide occupies residues 1–26; it reads MKIGKKILIMLVTIFLTSLVALGVYA. Residues 347–397 are compositionally biased toward low complexity; that stretch reads SSSASDYSSSGNYSGSSSDYGSSSSYGSNSSSGSSSDYSGQNSYNQGNYQQ. A disordered region spans residues 347 to 406; that stretch reads SSSASDYSSSGNYSGSSSDYGSSSSYGSNSSSGSSSDYSGQNSYNQGNYQQPAAGTGIGN.

Belongs to the LytR/CpsA/Psr (LCP) family.

The protein localises to the cell envelope. Functionally, involved in biofilm formation, cell division, autolysis and the regulation of acid and oxidative stress tolerance. May be associated with systemic virulence in blood. In Streptococcus mutans serotype c (strain ATCC 700610 / UA159), this protein is Biofilm regulatory protein A (brpA).